A 490-amino-acid polypeptide reads, in one-letter code: Probable malate:quinone oxidoreductase (490 aa).

It belongs to the MQO family. The cofactor is FAD.

The catalysed reaction is (S)-malate + a quinone = a quinol + oxaloacetate. The protein operates within carbohydrate metabolism; tricarboxylic acid cycle; oxaloacetate from (S)-malate (quinone route): step 1/1. The chain is Probable malate:quinone oxidoreductase from Corynebacterium jeikeium (strain K411).